Here is a 257-residue protein sequence, read N- to C-terminus: Uroplakin-1a (257 aa).

The Cytoplasmic segment spans residues 1-13 (MASAATEGEKGSP). A helical membrane pass occupies residues 14 to 34 (VVVGLLVVGNIIILLSGLALF). Over 35-58 (AETVWVTADQYRVYPLMGVSGKDD) the chain is Extracellular. Residues 59-85 (VFAGAWIAIFCGFSFFVVASFGVGAAL) traverse the membrane as a helical segment. The Cytoplasmic segment spans residues 86 to 90 (CRRRY). A helical membrane pass occupies residues 91 to 111 (MILTYLLLMLIVYIFECASCI). Over 112-229 (TSYTHRDYMV…HIGHAIDSYT (118 aa)) the chain is Extracellular. N-linked (GlcNAc...) asparagine glycosylation is present at asparagine 169. A helical transmembrane segment spans residues 230–251 (WGISWFGFAILMWTLPVMLIAM). Residues 252–257 (YFYTTL) are Cytoplasmic-facing.

Belongs to the tetraspanin (TM4SF) family. In terms of assembly, homodimer; disulfide-linked. Interacts with uroplakin-2 (UPK2). Binds to uropathogenic E.coli fimH.

It localises to the membrane. In terms of biological role, component of the asymmetric unit membrane (AUM); a highly specialized biomembrane elaborated by terminally differentiated urothelial cells. May play an important role in normal bladder epithelial physiology, possibly in regulating membrane permeability of superficial umbrella cells or in stabilizing the apical membrane through AUM/cytoskeletal interactions. This chain is Uroplakin-1a (Upk1a), found in Mus musculus (Mouse).